Reading from the N-terminus, the 291-residue chain is Aspartate carbamoyltransferase catalytic subunit (291 aa).

Residues Arg-49 and Thr-50 each coordinate carbamoyl phosphate. Lys-77 lines the L-aspartate pocket. Arg-99, His-127, and Gln-130 together coordinate carbamoyl phosphate. L-aspartate contacts are provided by Arg-160 and Arg-210. Carbamoyl phosphate-binding residues include Gly-249 and Pro-250.

Belongs to the aspartate/ornithine carbamoyltransferase superfamily. ATCase family. As to quaternary structure, heterododecamer (2C3:3R2) of six catalytic PyrB chains organized as two trimers (C3), and six regulatory PyrI chains organized as three dimers (R2).

It carries out the reaction carbamoyl phosphate + L-aspartate = N-carbamoyl-L-aspartate + phosphate + H(+). It participates in pyrimidine metabolism; UMP biosynthesis via de novo pathway; (S)-dihydroorotate from bicarbonate: step 2/3. Its function is as follows. Catalyzes the condensation of carbamoyl phosphate and aspartate to form carbamoyl aspartate and inorganic phosphate, the committed step in the de novo pyrimidine nucleotide biosynthesis pathway. The polypeptide is Aspartate carbamoyltransferase catalytic subunit (Sulfurimonas denitrificans (strain ATCC 33889 / DSM 1251) (Thiomicrospira denitrificans (strain ATCC 33889 / DSM 1251))).